Reading from the N-terminus, the 85-residue chain is Neurotoxin beta-KTx 17 (85 aa).

The N-terminal stretch at 1–20 (MKQYIFFLALIVLVSTFAEA) is a signal peptide. Positions 21–37 (GKKTEILDKVKKVFSKG) are excised as a propeptide. One can recognise a BetaSPN-type CS-alpha/beta domain in the interval 49–85 (ELGCPFIEKWCEDHCESKKQVGKCENFDCSCVKLGGK). Disulfide bonds link Cys-52–Cys-72, Cys-59–Cys-77, and Cys-63–Cys-79.

The protein belongs to the long chain scorpion toxin family. Class 2 subfamily. As to expression, expressed by the venom gland.

The protein resides in the secreted. Its function is as follows. Has a very weak effect to block voltage-gated potassium channel Kv1.1/KCNA1. In Lychas mucronatus (Chinese swimming scorpion), this protein is Neurotoxin beta-KTx 17.